Reading from the N-terminus, the 876-residue chain is Liprin-beta-2 (876 aa).

A coiled-coil region spans residues 101–313 (AASNETYQER…TGLLNQYRKV (213 aa)). 3 positions are modified to phosphoserine: serine 329, serine 363, and serine 387. Positions 356–376 (EMPPRCSSPTVGPPPLPQKSL) are disordered. 2 disordered regions span residues 425 to 451 (LPGK…PDAT) and 470 to 500 (VVND…PKGI). The segment covering 473-489 (DLSSTSSGTESGPQSPL) has biased composition (polar residues). Phosphoserine is present on serine 512. The segment at 527 to 553 (RGGLRATAGPRLSRTRDSKGQKSDANA) is disordered. SAM domains are found at residues 558 to 622 (WSTE…INTK), 630 to 693 (LDHI…LHVN), and 718 to 783 (WSNH…KFNA).

Belongs to the liprin family. Liprin-beta subfamily. In terms of assembly, forms homodimers and heterodimers. In terms of tissue distribution, widely expressed.

May regulate the disassembly of focal adhesions. Did not bind receptor-like tyrosine phosphatases type 2A. This Homo sapiens (Human) protein is Liprin-beta-2 (PPFIBP2).